Reading from the N-terminus, the 509-residue chain is DNA nucleotidylexotransferase (509 aa).

A disordered region spans residues 1–25 (MDPLCTASSGPRKKRPRQVGASMAS). The short motif at 11 to 17 (PRKKRPR) is the Nuclear localization signal element. In terms of domain architecture, BRCT spans 27 to 124 (PHDIKFQNLV…KPVEITGKHQ (98 aa)). The segment at 151–509 (SQYACQRKTT…DYIEPWERNA (359 aa)) is mediates interaction with DNTTIP2. The tract at residues 258–262 (VGLKT) is involved in DNA binding. Residues 333–338 (GFRRGK) and 342–345 (HDVD) contribute to the a 2'-deoxyribonucleoside 5'-triphosphate site. Mg(2+) contacts are provided by Asp-343, Asp-345, and Asp-433. 448–449 (GW) serves as a coordination point for a 2'-deoxyribonucleoside 5'-triphosphate.

This sequence belongs to the DNA polymerase type-X family. As to quaternary structure, interacts with PRP19 and DNTTIP1. Forms a ternary complex with DNTTIP2 and core histone. Released from this complex by PCNA. Interacts with TRERF1. Requires Mg(2+) as cofactor.

It is found in the nucleus. The catalysed reaction is DNA(n) + a 2'-deoxyribonucleoside 5'-triphosphate = DNA(n+1) + diphosphate. In terms of biological role, template-independent DNA polymerase which catalyzes the random addition of deoxynucleoside 5'-triphosphate to the 3'-end of a DNA initiator. One of the in vivo functions of this enzyme is the addition of nucleotides at the junction (N region) of rearranged Ig heavy chain and T-cell receptor gene segments during the maturation of B- and T-cells. The sequence is that of DNA nucleotidylexotransferase (DNTT) from Bos taurus (Bovine).